A 277-amino-acid chain; its full sequence is Adaptin ear-binding coat-associated protein 1 (277 aa).

Residues 164 to 277 (GNITAKKGGT…APQPSNWVQF (114 aa)) form a disordered region. Positions 187-201 (LPPPPGGKVTIPPPS) are enriched in pro residues. Threonine 211 carries the post-translational modification Phosphothreonine. Positions 222–234 (SNDSDILLDLDSP) are enriched in low complexity. A compositionally biased stretch (pro residues) spans 235–245 (APVPTSAPAPA). 2 short sequence motifs (WXXF motif) span residues 254 to 257 (WGDF) and 274 to 277 (WVQF). Positions 258-277 (STASSSVPNQAPQPSNWVQF) are enriched in polar residues.

It belongs to the NECAP family. In terms of assembly, interacts with AP1G1 and AP2A1 components of the adapter protein complexes AP-1 and AP-2. Interacts with the GAE domain proteins GGA1, GGA2 and GGA3. Interacts with AP2A2. In terms of tissue distribution, expressed predominantly in brain (at protein level).

The protein resides in the cytoplasmic vesicle. It localises to the clathrin-coated vesicle membrane. Its subcellular location is the cell membrane. In terms of biological role, involved in endocytosis. In Rattus norvegicus (Rat), this protein is Adaptin ear-binding coat-associated protein 1 (Necap1).